Here is a 330-residue protein sequence, read N- to C-terminus: NADH-quinone oxidoreductase subunit H (330 aa).

Helical transmembrane passes span 5–25, 44–64, 78–98, 122–142, 156–176, 192–212, 240–260, 271–293, and 310–330; these read LFFIIETFIKAVVILAVIACL, IGPDMVGPVGVLQIVADMIKL, FIFLIAPLISAIAAFAALAPI, VLYVMGVASVCVFSPLMAGLA, VMGLISFEVVSGLALLSVIMI, IFGWFVFKQPLAFVLFLMASF, MRWAMFFIGEYANMIASSIVI, FWFVPGGLMMIFKASCVFFFFLW, and CWKILLPLALVNVLITGIALI.

It belongs to the complex I subunit 1 family. As to quaternary structure, NDH-1 is composed of 14 different subunits. Subunits NuoA, H, J, K, L, M, N constitute the membrane sector of the complex.

The protein resides in the cell inner membrane. It catalyses the reaction a quinone + NADH + 5 H(+)(in) = a quinol + NAD(+) + 4 H(+)(out). Functionally, NDH-1 shuttles electrons from NADH, via FMN and iron-sulfur (Fe-S) centers, to quinones in the respiratory chain. The immediate electron acceptor for the enzyme in this species is believed to be ubiquinone. Couples the redox reaction to proton translocation (for every two electrons transferred, four hydrogen ions are translocated across the cytoplasmic membrane), and thus conserves the redox energy in a proton gradient. This subunit may bind ubiquinone. This chain is NADH-quinone oxidoreductase subunit H, found in Campylobacter curvus (strain 525.92).